A 444-amino-acid polypeptide reads, in one-letter code: MKKLNIGDYNDILNEVLNDISPTEVEKKELKVFSDKIIAKIKDISKKPVVDIIQVGSTARDANLKDDHDIDIFLRFERETDRDTLKESGLKIGKEVIDYFNGKSWVEYAEHPYVSGEIEKFNLDIVPCYGIENCEKIISAVDRTPLHNEFLIMSYKNKNLSDDIRLLKKFLKGLGIYGSDLKTAGFSGYLCELLILKYGGFLTLISDVKTWKPTKSIVLNEIYEMYDLKKDHVFSKFDDPLVVYDPVDLNRNVAAALNEENLCKFIFYSKMFLKNPSKDFFYGFDKKITDFLNRRERGYLLTLEIKRPENIVEDVIYPQMEKIQKSINKLVKEHDFEYLRYQNFADENTCYLSWEFLVNELPSVKLRIGPPVYSEPGVMNFITHNEHYFVKGCNVCAYKTRKYKNIQILFEDIVNGKFRKIITYPKYVCPENAEIRLGTFVERT.

Positions 57 and 60 each coordinate ATP. 2 residues coordinate CTP: Ser57 and Arg60. Mg(2+) contacts are provided by Asp69, Asp71, and Asp124. ATP-binding residues include His147, Lys168, and Tyr177. Positions 147, 168, and 177 each coordinate CTP.

It belongs to the tRNA nucleotidyltransferase/poly(A) polymerase family. Archaeal CCA-adding enzyme subfamily. As to quaternary structure, homodimer. Mg(2+) serves as cofactor.

It carries out the reaction a tRNA precursor + 2 CTP + ATP = a tRNA with a 3' CCA end + 3 diphosphate. The enzyme catalyses a tRNA with a 3' CCA end + 2 CTP + ATP = a tRNA with a 3' CCACCA end + 3 diphosphate. Its function is as follows. Catalyzes the addition and repair of the essential 3'-terminal CCA sequence in tRNAs without using a nucleic acid template. Adds these three nucleotides in the order of C, C, and A to the tRNA nucleotide-73, using CTP and ATP as substrates and producing inorganic pyrophosphate. tRNA 3'-terminal CCA addition is required both for tRNA processing and repair. Also involved in tRNA surveillance by mediating tandem CCA addition to generate a CCACCA at the 3' terminus of unstable tRNAs. While stable tRNAs receive only 3'-terminal CCA, unstable tRNAs are marked with CCACCA and rapidly degraded. In Methanococcus maripaludis (strain C7 / ATCC BAA-1331), this protein is CCA-adding enzyme.